We begin with the raw amino-acid sequence, 430 residues long: Rho GTPase-activating protein 2 (430 aa).

Residues 1–36 form a disordered region; sequence MTGLVMMTKGGGCGGGGKGGRRKSTAEEEEEEEQNQ. A compositionally biased stretch (gly residues) spans 9–18; the sequence is KGGGCGGGGK. Residues 80–93 form the CRIB domain; it reads IGWPTNVRHITHVT. The Rho-GAP domain occupies 125–310; sequence VSAESMQCSY…TLAEREENAT (186 aa). The segment at 307–372 is disordered; that stretch reads ENATGSEGYS…HLSRHSTHED (66 aa). Low complexity predominate over residues 316-326; it reads SPSHSSNSQTD. Over residues 347–356 the composition is skewed to acidic residues; it reads ECGEEEEVEE. Positions 357–371 are enriched in basic and acidic residues; sequence VEQHQEHLSRHSTHE.

Homodimerizes via its Rho-GAP domain and forms a tetrameric complex (2:2) with ARAC1/ROP3, ARAC2/ROP7, ARAC4/ROP2, ARAC5/ROP4, ARAC7/ROP9 or ARAC11/ROP1.

Acts as a GTPase activator for the Rac-type GTPase by converting it to an inactive GDP-bound state. This is Rho GTPase-activating protein 2 (ROPGAP2) from Arabidopsis thaliana (Mouse-ear cress).